A 488-amino-acid chain; its full sequence is Ribulose bisphosphate carboxylase large chain (488 aa).

N127 and T177 together coordinate substrate. Catalysis depends on K179, which acts as the Proton acceptor. K181 contributes to the substrate binding site. The Mg(2+) site is built by K205, D207, and E208. At K205 the chain carries N6-carboxylysine. Catalysis depends on H297, which acts as the Proton acceptor. The substrate site is built by R298, H330, and S382.

This sequence belongs to the RuBisCO large chain family. Type I subfamily. Heterohexadecamer of 8 large chains and 8 small chains. Mg(2+) is required as a cofactor.

The protein resides in the plastid. Its subcellular location is the chloroplast. The catalysed reaction is 2 (2R)-3-phosphoglycerate + 2 H(+) = D-ribulose 1,5-bisphosphate + CO2 + H2O. The enzyme catalyses D-ribulose 1,5-bisphosphate + O2 = 2-phosphoglycolate + (2R)-3-phosphoglycerate + 2 H(+). Functionally, ruBisCO catalyzes two reactions: the carboxylation of D-ribulose 1,5-bisphosphate, the primary event in carbon dioxide fixation, as well as the oxidative fragmentation of the pentose substrate in the photorespiration process. Both reactions occur simultaneously and in competition at the same active site. This chain is Ribulose bisphosphate carboxylase large chain (rbcL), found in Porphyra umbilicalis (Purple laver).